The following is a 531-amino-acid chain: Flavin-containing monooxygenase 3 (531 aa).

FAD-binding positions include 9-13 (GAGIS), glutamate 32, 40-41 (LW), and 61-62 (NS). NADP(+)-binding positions include 60-61 (TN) and 195-198 (SGCD). The chain crosses the membrane as a helical span at residues 511-531 (FSPWLKLLAIAVLLIAAVLVF).

This sequence belongs to the FMO family. It depends on FAD as a cofactor. Liver.

It is found in the microsome membrane. It localises to the endoplasmic reticulum membrane. It carries out the reaction trimethylamine + NADPH + O2 = trimethylamine N-oxide + NADP(+) + H2O. The catalysed reaction is N,N-dimethylaniline + NADPH + O2 + H(+) = N,N-dimethylaniline N-oxide + NADP(+) + H2O. The enzyme catalyses hypotaurine + NADPH + O2 + H(+) = taurine + NADP(+) + H2O. It catalyses the reaction (S)-nicotine + NADPH + O2 = trans-(S)-nicotine N(1')-oxide + NADP(+) + H2O. It carries out the reaction albendazole + NADPH + O2 + H(+) = albendazole S-oxide + NADP(+) + H2O. In terms of biological role, essential hepatic enzyme that catalyzes the oxygenation of a wide variety of nitrogen- and sulfur-containing compounds including drugs as well as dietary compounds. Plays an important role in the metabolism of trimethylamine (TMA), via the production of trimethylamine N-oxide (TMAO) metabolite. TMA is generated by the action of gut microbiota using dietary precursors such as choline, choline containing compounds, betaine or L-carnitine. By regulating TMAO concentration, FMO3 directly impacts both platelet responsiveness and rate of thrombus formation. The protein is Flavin-containing monooxygenase 3 (FMO3) of Oryctolagus cuniculus (Rabbit).